Reading from the N-terminus, the 537-residue chain is MLFINTDLQECLNALNLEFDEHKELVKLVKNNSFSGFASTVVFHLKGVNQKETAQQIAAWLLKHKKAHYRRVFVANNNFINFEISPQKYLDFLKTKPTFAPKPTKVLIEWVSANPTGELHLGHVRNAFFGHVLNNLMVFLGFQTVREYWVNDYGQQARVFGFSVYQALHLQQNIKVTPHPDGYEGELVDSIAKTITGIPLDKLSFEEFLQQPFLDQLLADCTAKVLEVIKQDLATIHIHFDSWKFESQVVKETDYKKLLTQFKDEAHYEKDGAIWLKTTLYGDDKDRVLVRQDNRPSYFGTDVAYHLDKAARGFDLLYDIWGSDHEGHIKRMHCVYEGLKIHQKCQLKITALQLVMLYKNKEIVRLSKRAGNVITIKQMLQMLSEDAARWFMLSQTNNSIIKIDLDTANLQNSSNPVYYVQYAYARMCSVLKVVDQAALAQVNDCSLLTHEKEIALLDQLVYFKSLLEKVQVSHELHLLTNYLYETATLFHSWYKACKINDPAQYNLTQQRLLLLQSLHHVFGQLLQILNITAPQQM.

Residues Ala-113–His-123 carry the 'HIGH' region motif.

The protein belongs to the class-I aminoacyl-tRNA synthetase family. As to quaternary structure, monomer.

The protein resides in the cytoplasm. The catalysed reaction is tRNA(Arg) + L-arginine + ATP = L-arginyl-tRNA(Arg) + AMP + diphosphate. In Mycoplasma pneumoniae (strain ATCC 29342 / M129 / Subtype 1) (Mycoplasmoides pneumoniae), this protein is Arginine--tRNA ligase (argS).